We begin with the raw amino-acid sequence, 271 residues long: Ribose-phosphate pyrophosphokinase 2 (271 aa).

ATP-binding positions include Asp-34–Glu-36 and Arg-82–Gln-83. His-115 and Asp-150 together coordinate Mg(2+). The active site involves Lys-173. D-ribose 5-phosphate-binding positions include Arg-175, Asp-199, and Ser-203–Thr-207.

The protein belongs to the ribose-phosphate pyrophosphokinase family. Class III (archaeal) subfamily. The cofactor is Mg(2+).

The protein localises to the cytoplasm. The enzyme catalyses D-ribose 5-phosphate + ATP = 5-phospho-alpha-D-ribose 1-diphosphate + AMP + H(+). Its pathway is metabolic intermediate biosynthesis; 5-phospho-alpha-D-ribose 1-diphosphate biosynthesis; 5-phospho-alpha-D-ribose 1-diphosphate from D-ribose 5-phosphate (route I): step 1/1. Functionally, involved in the biosynthesis of the central metabolite phospho-alpha-D-ribosyl-1-pyrophosphate (PRPP) via the transfer of pyrophosphoryl group from ATP to 1-hydroxyl of ribose-5-phosphate (Rib-5-P). This chain is Ribose-phosphate pyrophosphokinase 2, found in Archaeoglobus fulgidus (strain ATCC 49558 / DSM 4304 / JCM 9628 / NBRC 100126 / VC-16).